A 447-amino-acid chain; its full sequence is Putative bacteriocin-SkfA transport system permease protein SkfF (447 aa).

Topologically, residues 1–3 are cytoplasmic; the sequence is MPF. Residues 4–22 traverse the membrane as a helical segment; that stretch reads LIMLLFVGAIGFQVSFVSR. The Extracellular portion of the chain corresponds to 23 to 29; that stretch reads STTWDMS. The helical transmembrane segment at 30–50 threads the bilayer; it reads IAGWVLTGVFILYTAFGLFSN. At 51–59 the chain is on the cytoplasmic side; the sequence is RLPSQMADI. A helical transmembrane segment spans residues 60–80; sequence IWLYGTATSFSKVVYSVLFFS. Residues 81 to 85 lie on the Extracellular side of the membrane; the sequence is VTWKA. Residues 86 to 104 form a helical membrane-spanning segment; that stretch reads LLWIISAIFGDVLIVLLSG. Over 105–113 the chain is Cytoplasmic; sequence DHINLLGRS. A helical membrane pass occupies residues 114–134; sequence IIFVGLFFIAEVWLMSVSCAR. Residues 135 to 141 are Extracellular-facing; sequence TVKKMKR. Residues 142–160 traverse the membrane as a helical segment; the sequence is VYVLVFLLMLGIYSICLYR. Residues 161–189 lie on the Cytoplasmic side of the membrane; that stretch reads FFFLQHSSGIWESIARFISGVGLVFDTLS. A helical membrane pass occupies residues 190 to 208; the sequence is PLYVVVFIGIITVSFMTIA. Over 209–247 the chain is Extracellular; the sequence is FTSRQVEMKESLVKEAEFWEEFQERQFGSGQIIQKPKTT. Residues 248 to 268 form a helical membrane-spanning segment; that stretch reads WWGLQGLNGIWSFLWLELLLF. Residues 269–297 are Cytoplasmic-facing; that stretch reads KKYLFFHSIHTVMLSGVFYVVIFMYPEWF. Residues 298-318 traverse the membrane as a helical segment; that stretch reads YLLFFLIVSAVMLSSYYSGIV. Topologically, residues 319-341 are extracellular; that stretch reads RHSQSGTLHLFPGALWKKIIILE. The helical transmembrane segment at 342-360 threads the bilayer; the sequence is LTNTVWLYILYCVSITFMA. Topologically, residues 361–363 are cytoplasmic; it reads VGN. The chain crosses the membrane as a helical span at residues 364–382; the sequence is LVYWYIYGLGIYIWFMTIR. At 383-404 the chain is on the extracellular side; that stretch reads LFAFTHTNRNDIKLSLPQYYKS. The helical transmembrane segment at 405-423 threads the bilayer; that stretch reads FFMALGLSGICLYVIHLLT. Topologically, residues 424–426 are cytoplasmic; sequence ADW. Residues 427-447 traverse the membrane as a helical segment; sequence YTLVVVVCIGSLSWCLFYRFR.

It localises to the cell membrane. Its function is as follows. Probably part of the ABC transporter SkfEF involved in the export of the bacteriocin SKF. Probably responsible for the translocation of bacteriocin SkfA across the membrane. The sequence is that of Putative bacteriocin-SkfA transport system permease protein SkfF from Bacillus subtilis (strain 168).